A 1465-amino-acid polypeptide reads, in one-letter code: DNA polymerase III PolC-type (1465 aa).

The 157-residue stretch at 427-583 folds into the Exonuclease domain; it reads YVVFDVETTG…YDAEATGRLL (157 aa).

This sequence belongs to the DNA polymerase type-C family. PolC subfamily.

Its subcellular location is the cytoplasm. It catalyses the reaction DNA(n) + a 2'-deoxyribonucleoside 5'-triphosphate = DNA(n+1) + diphosphate. Its function is as follows. Required for replicative DNA synthesis. This DNA polymerase also exhibits 3' to 5' exonuclease activity. This is DNA polymerase III PolC-type from Streptococcus pyogenes serotype M4 (strain MGAS10750).